Here is a 532-residue protein sequence, read N- to C-terminus: Pre-piRNA 3'-exonuclease trimmer (532 aa).

Mg(2+) contacts are provided by aspartate 28, glutamate 30, aspartate 270, and aspartate 365. A helical membrane pass occupies residues 503 to 523 (AGRFAIWSGSIVTGGLALYLI).

This sequence belongs to the CAF1 family. Interacts with Papi/Tdrkh; interaction takes place on the mitochondrial surface and recruits PNLDC1/trimmer to PIWI-bound pre-piRNAs. It depends on Mg(2+) as a cofactor.

Its subcellular location is the mitochondrion outer membrane. Its function is as follows. 3'-5' exonuclease that specifically cleaves precursor piRNAs (pre-piRNAs) at their 3' ends. Trims pre-piRNAs to their mature size, a process required for piRNAs maturation and stabilization, and subsequent pre-piRNAs 2'-O-methylation. The piRNA metabolic process mediates the repression of transposable elements during meiosis by forming complexes composed of piRNAs and Piwi proteins and govern the methylation and subsequent repression of transposons. This is Pre-piRNA 3'-exonuclease trimmer from Bombyx mori (Silk moth).